The primary structure comprises 217 residues: Deoxyribose-phosphate aldolase 1 (217 aa).

Asp89 serves as the catalytic Proton donor/acceptor. Lys151 functions as the Schiff-base intermediate with acetaldehyde in the catalytic mechanism. Lys180 acts as the Proton donor/acceptor in catalysis.

It belongs to the DeoC/FbaB aldolase family. DeoC type 1 subfamily.

The protein resides in the cytoplasm. It carries out the reaction 2-deoxy-D-ribose 5-phosphate = D-glyceraldehyde 3-phosphate + acetaldehyde. It functions in the pathway carbohydrate degradation; 2-deoxy-D-ribose 1-phosphate degradation; D-glyceraldehyde 3-phosphate and acetaldehyde from 2-deoxy-alpha-D-ribose 1-phosphate: step 2/2. Its function is as follows. Catalyzes a reversible aldol reaction between acetaldehyde and D-glyceraldehyde 3-phosphate to generate 2-deoxy-D-ribose 5-phosphate. In Cutibacterium acnes (strain DSM 16379 / KPA171202) (Propionibacterium acnes), this protein is Deoxyribose-phosphate aldolase 1.